A 395-amino-acid polypeptide reads, in one-letter code: Dihydroorotate dehydrogenase (quinone), mitochondrial (395 aa).

The N-terminal 10 residues, 1-10, are a transit peptide targeting the mitochondrion; not cleaved; the sequence is MAWRQLRKRA. Over 1–10 the chain is Mitochondrial matrix; it reads MAWRQLRKRA. Residues 11-30 traverse the membrane as a helical segment; sequence LDAAIILGGGGLLFTSYLTA. Residues 31–395 lie on the Mitochondrial intermembrane side of the membrane; it reads TGDDHFYAEY…TDAIGVDHRR (365 aa). FMN-binding positions include 95 to 99 and Ser119; that span reads AGFDK. Residue Lys99 participates in substrate binding. Residue 144-148 participates in substrate binding; that stretch reads NRYGF. 2 residues coordinate FMN: Asn180 and Asn211. Position 211-216 (211-216) interacts with substrate; that stretch reads NVSSPN. Ser214 functions as the Nucleophile in the catalytic mechanism. Residues Lys254 and Thr282 each coordinate FMN. 283–284 provides a ligand contact to substrate; the sequence is NT. FMN contacts are provided by residues Gly305, Gly334, and 355–356; that span reads YT.

This sequence belongs to the dihydroorotate dehydrogenase family. Type 2 subfamily. Monomer. FMN serves as cofactor. In terms of processing, the uncleaved transit peptide is required for mitochondrial targeting and proper membrane integration.

The protein resides in the mitochondrion inner membrane. The catalysed reaction is (S)-dihydroorotate + a quinone = orotate + a quinol. The protein operates within pyrimidine metabolism; UMP biosynthesis via de novo pathway; orotate from (S)-dihydroorotate (quinone route): step 1/1. Functionally, catalyzes the conversion of dihydroorotate to orotate with quinone as electron acceptor. Required for UMP biosynthesis via de novo pathway. The chain is Dihydroorotate dehydrogenase (quinone), mitochondrial (Dhodh) from Mus musculus (Mouse).